A 450-amino-acid polypeptide reads, in one-letter code: tRNA modification GTPase MnmE (450 aa).

The (6S)-5-formyl-5,6,7,8-tetrahydrofolate site is built by arginine 25, glutamate 86, and arginine 126. The 153-residue stretch at 221-373 (GLRVALVGRP…LVQALLERCG (153 aa)) folds into the TrmE-type G domain. Asparagine 231 is a binding site for K(+). Residues 231-236 (NVGKSS), 250-256 (TELPGTT), 275-278 (DTAG), and 336-339 (NKAD) each bind GTP. Serine 235 provides a ligand contact to Mg(2+). K(+) is bound by residues threonine 250, leucine 252, and threonine 255. A Mg(2+)-binding site is contributed by threonine 256. Lysine 450 contacts (6S)-5-formyl-5,6,7,8-tetrahydrofolate.

It belongs to the TRAFAC class TrmE-Era-EngA-EngB-Septin-like GTPase superfamily. TrmE GTPase family. As to quaternary structure, homodimer. Heterotetramer of two MnmE and two MnmG subunits. K(+) serves as cofactor.

The protein localises to the cytoplasm. Exhibits a very high intrinsic GTPase hydrolysis rate. Involved in the addition of a carboxymethylaminomethyl (cmnm) group at the wobble position (U34) of certain tRNAs, forming tRNA-cmnm(5)s(2)U34. The protein is tRNA modification GTPase MnmE of Parasynechococcus marenigrum (strain WH8102).